A 301-amino-acid polypeptide reads, in one-letter code: NADH-cytochrome b5 reductase 2 (301 aa).

The chain crosses the membrane as a helical span at residues 14 to 30 (FLVPFAGATALSIGLAL). One can recognise an FAD-binding FR-type domain in the interval 51-155 (NEWVDLKLSK…KGPIVKWKWE (105 aa)). FAD is bound at residue 158 to 193 (QFKSIALIGGGTGITPLYQLLHQITSNPKDNTKVNL).

It belongs to the flavoprotein pyridine nucleotide cytochrome reductase family. FAD serves as cofactor.

It localises to the mitochondrion outer membrane. The enzyme catalyses 2 Fe(III)-[cytochrome b5] + NADH = 2 Fe(II)-[cytochrome b5] + NAD(+) + H(+). Functionally, may mediate the reduction of outer membrane cytochrome b5. This chain is NADH-cytochrome b5 reductase 2 (MCR1), found in Candida albicans (strain SC5314 / ATCC MYA-2876) (Yeast).